A 554-amino-acid polypeptide reads, in one-letter code: 2-succinyl-5-enolpyruvyl-6-hydroxy-3-cyclohexene-1-carboxylate synthase (554 aa).

The protein belongs to the TPP enzyme family. MenD subfamily. As to quaternary structure, homodimer. Mg(2+) serves as cofactor. Mn(2+) is required as a cofactor. Requires thiamine diphosphate as cofactor.

The catalysed reaction is isochorismate + 2-oxoglutarate + H(+) = 5-enolpyruvoyl-6-hydroxy-2-succinyl-cyclohex-3-ene-1-carboxylate + CO2. It functions in the pathway quinol/quinone metabolism; 1,4-dihydroxy-2-naphthoate biosynthesis; 1,4-dihydroxy-2-naphthoate from chorismate: step 2/7. The protein operates within quinol/quinone metabolism; menaquinone biosynthesis. Functionally, catalyzes the thiamine diphosphate-dependent decarboxylation of 2-oxoglutarate and the subsequent addition of the resulting succinic semialdehyde-thiamine pyrophosphate anion to isochorismate to yield 2-succinyl-5-enolpyruvyl-6-hydroxy-3-cyclohexene-1-carboxylate (SEPHCHC). This chain is 2-succinyl-5-enolpyruvyl-6-hydroxy-3-cyclohexene-1-carboxylate synthase, found in Flavobacterium johnsoniae (strain ATCC 17061 / DSM 2064 / JCM 8514 / BCRC 14874 / CCUG 350202 / NBRC 14942 / NCIMB 11054 / UW101) (Cytophaga johnsonae).